Here is a 327-residue protein sequence, read N- to C-terminus: L-serine dehydratase/L-threonine deaminase (327 aa).

Position 41 is an N6-(pyridoxal phosphate)lysine (Lys41).

The protein belongs to the serine/threonine dehydratase family. As to quaternary structure, homodimer. Pyridoxal 5'-phosphate serves as cofactor.

Its subcellular location is the cytoplasm. The catalysed reaction is L-serine = pyruvate + NH4(+). The enzyme catalyses L-threonine = 2-oxobutanoate + NH4(+). It participates in carbohydrate biosynthesis; gluconeogenesis. Its function is as follows. Catalyzes the pyridoxal-phosphate-dependent dehydrative deamination of L-threonine and L-serine to ammonia and alpha-ketobutyrate and pyruvate, respectively. This Bos taurus (Bovine) protein is L-serine dehydratase/L-threonine deaminase (SDS).